Reading from the N-terminus, the 366-residue chain is Protein U1 (366 aa).

This sequence belongs to the herpesviridae US22 family.

The chain is Protein U1 (U1) from Human herpesvirus 6A (strain Uganda-1102) (HHV-6 variant A).